Reading from the N-terminus, the 152-residue chain is Transcriptional regulator MraZ (152 aa).

SpoVT-AbrB domains follow at residues 5 to 52 (INAI…TAAQ) and 81 to 124 (ATDV…NKEL).

Belongs to the MraZ family. As to quaternary structure, forms oligomers.

The protein resides in the cytoplasm. Its subcellular location is the nucleoid. The protein is Transcriptional regulator MraZ of Legionella pneumophila (strain Paris).